A 213-amino-acid chain; its full sequence is ER lumen protein-retaining receptor erd-2.2 (213 aa).

Topologically, residues 1 to 2 are lumenal; sequence MN. A helical membrane pass occupies residues 3–21; sequence IFRISADMSHLLAIIILLL. At 22–35 the chain is on the cytoplasmic side; sequence KIWKSRSCSGISAR. Residues 36 to 53 traverse the membrane as a helical segment; sequence SQILFALVFTARYLDLFS. Residues 54-61 are Lumenal-facing; the sequence is TYISLYNT. A helical membrane pass occupies residues 62-80; the sequence is TMKITFLAATYATVYLMFF. The Cytoplasmic portion of the chain corresponds to 81-96; the sequence is KFRSTYMRESDTFRVE. Residues 97–110 form a helical membrane-spanning segment; the sequence is LLIVPAAILALLIN. Topologically, residues 111 to 117 are lumenal; sequence HDFAPFE. The helical transmembrane segment at 118–137 threads the bilayer; it reads LLWTFSIYLEAVAILPQLFL. Residues 138 to 149 are Cytoplasmic-facing; sequence LQSTGSAEVITA. A helical membrane pass occupies residues 150–168; it reads HYLFALGSYRALYIFNWIY. Residues 169–178 are Lumenal-facing; it reads RYYTEDYFDP. Residues 179–199 traverse the membrane as a helical segment; sequence IVVVAGIVQTVLYADFFYLYV. At 200-213 the chain is on the cytoplasmic side; that stretch reads TRVVQTRKGMELPI.

It belongs to the ERD2 family.

It localises to the endoplasmic reticulum membrane. Its function is as follows. Required for the retention of luminal endoplasmic reticulum proteins. Determines the specificity of the luminal ER protein retention system. Also required for normal vesicular traffic through the Golgi. The protein is ER lumen protein-retaining receptor erd-2.2 of Caenorhabditis elegans.